Here is a 102-residue protein sequence, read N- to C-terminus: MLHIDELTFENEVLQSEKLVLVDFWAPWCGPCRMIGPILEEIAKEFNLKVVQVNTDENPNLATFYGIRSIPTLMLFKKGQRVDTVIGAVPKSILIHTINKYL.

One can recognise a Thioredoxin domain in the interval 2–102 (LHIDELTFEN…ILIHTINKYL (101 aa)). Residues C29 and C32 each act as nucleophile in the active site. C29 and C32 are oxidised to a cystine.

It belongs to the thioredoxin family.

Its subcellular location is the plastid. The protein localises to the chloroplast. In terms of biological role, participates in various redox reactions through the reversible oxidation of its active center dithiol to a disulfide and catalyzes dithiol-disulfide exchange reactions. This Cyanidioschyzon merolae (strain NIES-3377 / 10D) (Unicellular red alga) protein is Thioredoxin (trxA).